A 403-amino-acid polypeptide reads, in one-letter code: CCA-adding enzyme (403 aa).

Gly-32 and Arg-35 together coordinate ATP. Residues Gly-32 and Arg-35 each contribute to the CTP site. Mg(2+) is bound by residues Asp-45 and Asp-47. Arg-116, Asp-159, Arg-162, Arg-165, and Arg-168 together coordinate ATP. 5 residues coordinate CTP: Arg-116, Asp-159, Arg-162, Arg-165, and Arg-168.

It belongs to the tRNA nucleotidyltransferase/poly(A) polymerase family. Bacterial CCA-adding enzyme type 3 subfamily. Homodimer. The cofactor is Mg(2+).

The enzyme catalyses a tRNA precursor + 2 CTP + ATP = a tRNA with a 3' CCA end + 3 diphosphate. It catalyses the reaction a tRNA with a 3' CCA end + 2 CTP + ATP = a tRNA with a 3' CCACCA end + 3 diphosphate. Its function is as follows. Catalyzes the addition and repair of the essential 3'-terminal CCA sequence in tRNAs without using a nucleic acid template. Adds these three nucleotides in the order of C, C, and A to the tRNA nucleotide-73, using CTP and ATP as substrates and producing inorganic pyrophosphate. tRNA 3'-terminal CCA addition is required both for tRNA processing and repair. Also involved in tRNA surveillance by mediating tandem CCA addition to generate a CCACCA at the 3' terminus of unstable tRNAs. While stable tRNAs receive only 3'-terminal CCA, unstable tRNAs are marked with CCACCA and rapidly degraded. In Limosilactobacillus reuteri (strain DSM 20016) (Lactobacillus reuteri), this protein is CCA-adding enzyme.